The sequence spans 107 residues: U1-lycotoxin-Ls1c (107 aa).

The first 20 residues, 1-20 (MMKVLVVVALLVTLISYSSS), serve as a signal peptide directing secretion. Residues 21-41 (EGIDDLEADELLSLMANEQTR) constitute a propeptide that is removed on maturation. Cystine bridges form between cysteine 44-cysteine 59, cysteine 51-cysteine 68, cysteine 58-cysteine 86, and cysteine 70-cysteine 84.

The protein belongs to the neurotoxin 19 (CSTX) family. 04 (U1-Lctx) subfamily. Expressed by the venom gland.

The protein localises to the secreted. This chain is U1-lycotoxin-Ls1c, found in Lycosa singoriensis (Wolf spider).